The sequence spans 498 residues: MKLLHERMMHSLARYPRQTAVVDEQDALSYEALELRIREFVAMLCALGVGQGQRILLWAHKSVDLVAVMQAALRLGVVYVPVDPLSPVSRLEKIAGDSQAVLVLCTAARLEELAGSALAQVRSVVLDDPASAGYWRNIDTGSSVVPTLAIQPDDLAYILYTSGSTGVPKGVALSHGNALAFVDWACERYCFQPGERFANHAPLHFDLSVLDIYCALNVGATVCLVPESIAFSPRLLTDFIRQHEISIWYSVPSVLMMMMQDGDLLSDIQDTLRVLLFAGEPFPVKHLRDLRAAYADVRLANLFGPTETNVCTAFEVGAIDPERVLPVPIGTAASGNQVWAQKPDGSRCAVGEEGELVVQGPTVMLGYFAKPAQEGPYKTGDMVRQRPDGNYEYLGRRDDMLKVRGNRIERGEVEAALLAHPQVSEAAVLVVGEGMNAQLWGVLVAHTRDALSLIDLKRHCAQRLPRYMIIDKVLCLDALPRNANGKVDRFALARQVEG.

This sequence belongs to the ATP-dependent AMP-binding enzyme family.

The catalysed reaction is holo-[peptidyl-carrier protein] + L-proline + ATP = L-prolyl-[peptidyl-carrier protein] + AMP + diphosphate. Its function is as follows. Involved in the biosynthesis of pyoluteorin. Catalyzes the conversion of L-proline to L-prolyl-AMP and the transfer of the L-prolyl group to acyl carrier protein PltL. The sequence is that of L-proline--[L-prolyl-carrier protein] ligase from Pseudomonas fluorescens (strain ATCC BAA-477 / NRRL B-23932 / Pf-5).